Here is a 325-residue protein sequence, read N- to C-terminus: HPr kinase/phosphorylase (325 aa).

Active-site residues include H152 and K173. 167 to 174 (GESGLGKS) serves as a coordination point for ATP. S174 serves as a coordination point for Mg(2+). D191 functions as the Proton acceptor; for phosphorylation activity. Proton donor; for dephosphorylation activity in the catalytic mechanism. The segment at 215–224 (LEVRGIGLLD) is important for the catalytic mechanism of both phosphorylation and dephosphorylation. E216 lines the Mg(2+) pocket. R258 is an active-site residue. Residues 279–284 (AVDAGR) are important for the catalytic mechanism of dephosphorylation.

Belongs to the HPrK/P family. As to quaternary structure, homohexamer. Mg(2+) serves as cofactor.

It catalyses the reaction [HPr protein]-L-serine + ATP = [HPr protein]-O-phospho-L-serine + ADP + H(+). The catalysed reaction is [HPr protein]-O-phospho-L-serine + phosphate + H(+) = [HPr protein]-L-serine + diphosphate. In terms of biological role, catalyzes the ATP- as well as the pyrophosphate-dependent phosphorylation of a specific serine residue in HPr, a phosphocarrier protein of the phosphoenolpyruvate-dependent sugar phosphotransferase system (PTS). HprK/P also catalyzes the pyrophosphate-producing, inorganic phosphate-dependent dephosphorylation (phosphorolysis) of seryl-phosphorylated HPr (P-Ser-HPr). The sequence is that of HPr kinase/phosphorylase from Leptothrix cholodnii (strain ATCC 51168 / LMG 8142 / SP-6) (Leptothrix discophora (strain SP-6)).